The following is an 84-amino-acid chain: uncharacterized protein (84 aa).

This is an uncharacterized protein from Schizosaccharomyces pombe (strain 972 / ATCC 24843) (Fission yeast).